Here is a 302-residue protein sequence, read N- to C-terminus: Protocatechuate 4,5-dioxygenase beta chain (302 aa).

Composed of two subunits (alpha and beta) in a 1:1 ratio. Requires Fe(2+) as cofactor.

It catalyses the reaction 3,4-dihydroxybenzoate + O2 = 4-carboxy-2-hydroxy-cis,cis-muconate 6-semialdehyde + H(+). Functionally, responsible for the aromatic ring fission of protocatechuate. This is Protocatechuate 4,5-dioxygenase beta chain (ligB) from Sphingobium sp. (strain NBRC 103272 / SYK-6).